Reading from the N-terminus, the 1425-residue chain is Ferlin 1 (1425 aa).

C2 domains follow at residues 1-123, 161-281, and 506-629; these read MAAK…RQWV, VNEG…PRWF, and TKAG…PVWL. Residues 871 to 952 are disordered; it reads RPQASRLSRE…ALAASPEEET (82 aa). Composition is skewed to basic and acidic residues over residues 877 to 889 and 912 to 926; these read LSREGTSRDERGK and ETEKKGDPVAEKKEG. C2 domains are found at residues 1032-1160 and 1192-1319; these read EMDA…EQMV and RADY…QQHY. Residues 1404–1424 traverse the membrane as a helical segment; it reads TGVWMTVAGIIALVIFVMFLL.

It belongs to the ferlin family.

The protein localises to the golgi apparatus. Its subcellular location is the trans-Golgi network membrane. The protein resides in the endosome membrane. It localises to the cytoplasm. In terms of biological role, plays a role in microneme replenishment, probably at the vesicular trafficking level. Directs microneme organelle traffic differentially based on microneme population. Regulates microneme secretion: facilitates microneme membrane fusion with the plasma membrane. The chain is Ferlin 1 from Toxoplasma gondii.